The chain runs to 145 residues: Probable 4-amino-4-deoxy-L-arabinose-phosphoundecaprenol flippase subunit ArnF (145 aa).

Residues 1–3 (MAH) lie on the Cytoplasmic side of the membrane. A helical membrane pass occupies residues 4–24 (LTLSIRGLLLALMSVLLISVA). Residues 25 to 61 (QLSMKWGMGTLNQLWSDLVMLWQGEDYSSLFSQALAP) lie on the Periplasmic side of the membrane. The helical transmembrane segment at 62-82 (VMAVGAGLFCYALSMACWVMA) threads the bilayer. Over 83–89 (LKRLPLS) the chain is Cytoplasmic. The helical transmembrane segment at 90–110 (IAYPLLSLSYVLVYLGAVYLP) threads the bilayer. At 111–114 (WLNE) the chain is on the periplasmic side. A helical membrane pass occupies residues 115-135 (PLSWVKGTGIFLILLGLIFVL). At 136–145 (PKKNQTSDKS) the chain is on the cytoplasmic side.

Belongs to the ArnF family. Heterodimer of ArnE and ArnF.

It localises to the cell inner membrane. The protein operates within bacterial outer membrane biogenesis; lipopolysaccharide biosynthesis. Translocates 4-amino-4-deoxy-L-arabinose-phosphoundecaprenol (alpha-L-Ara4N-phosphoundecaprenol) from the cytoplasmic to the periplasmic side of the inner membrane. This Shewanella sediminis (strain HAW-EB3) protein is Probable 4-amino-4-deoxy-L-arabinose-phosphoundecaprenol flippase subunit ArnF.